We begin with the raw amino-acid sequence, 309 residues long: MTATYMNSSVPFMYDSYPAVAPERFQGQLQGKTAIVTGGSSGIGRAVCKAFASAGASVACIARREPRLKTLVDEIKAEGGKAIPLAVDISEKDAAKKIVSQVEAELGPVDILVNVAGIARLGPLVDEPEDLDIWWKVHEVNVRAPALLTRAVLPSMIERKSGAVISVSSVVATWPSPIQTAYASSKAAISKFHESLAAELEGTGVLSFALNPGSVESELGAPDDAINTASQHPMLEKMRQMLKSPRKKQTAQLPADVCVALVCDPRCKVLNGRHVEAAQDLSPVLEEAEKEGGGRIGKDRLYLVNIGIL.

Residues Ile43, Arg67, Asp88, and Arg150 each contribute to the NADP(+) site. The active-site Proton donor is Ser168. NADP(+)-binding residues include Tyr182, Lys186, Val215, and Ser217. Tyr182 serves as the catalytic Proton acceptor. Lys186 serves as the catalytic Lowers pKa of active site Tyr.

It belongs to the short-chain dehydrogenases/reductases (SDR) family.

It participates in secondary metabolite biosynthesis. Functionally, short chain dehydrogenase; part of the gene cluster that mediates the biosynthesis of an emodin derivative that may be involved in black Sigatoka disease of banana. The pathway begins with the synthesis of atrochrysone thioester by the polyketide synthase PKS8-1. The atrochrysone carboxyl ACP thioesterase MYCFIDRAFT_190111 then breaks the thioester bond and releases the atrochrysone carboxylic acid from PKS8-1. The decarboxylase MYCFIDRAFT_34057 then catalyzes the concerted decarboxylation-elimination required to convert atochrysone carboxylic acid into emodin anthrone, which is further oxidized to emodin by the anthrone oxygenase MYCFIDRAFT_34418. The functions of the other tailoring enzymes as well as the final product of the cluster have still to be identified. This Pseudocercospora fijiensis (strain CIRAD86) (Black leaf streak disease fungus) protein is Short chain dehydrogenase MYCFIDRAFT_6125.